A 101-amino-acid chain; its full sequence is Integration host factor subunit beta (101 aa).

Residues 57-101 (PARAGRNPRTGAHVPVDQKSVPFFKTGKEMRERLNRDHPDPGAAD) form a disordered region. Positions 82 to 101 (TGKEMRERLNRDHPDPGAAD) are enriched in basic and acidic residues.

The protein belongs to the bacterial histone-like protein family. In terms of assembly, heterodimer of an alpha and a beta chain.

Its function is as follows. This protein is one of the two subunits of integration host factor, a specific DNA-binding protein that functions in genetic recombination as well as in transcriptional and translational control. The sequence is that of Integration host factor subunit beta from Bradyrhizobium diazoefficiens (strain JCM 10833 / BCRC 13528 / IAM 13628 / NBRC 14792 / USDA 110).